The sequence spans 119 residues: Ribonuclease P protein component (119 aa).

This sequence belongs to the RnpA family. As to quaternary structure, consists of a catalytic RNA component (M1 or rnpB) and a protein subunit.

It carries out the reaction Endonucleolytic cleavage of RNA, removing 5'-extranucleotides from tRNA precursor.. Functionally, RNaseP catalyzes the removal of the 5'-leader sequence from pre-tRNA to produce the mature 5'-terminus. It can also cleave other RNA substrates such as 4.5S RNA. The protein component plays an auxiliary but essential role in vivo by binding to the 5'-leader sequence and broadening the substrate specificity of the ribozyme. The sequence is that of Ribonuclease P protein component from Salmonella paratyphi A (strain AKU_12601).